A 402-amino-acid chain; its full sequence is Triose phosphate/phosphate translocator, non-green plastid, chloroplastic (402 aa).

A chloroplast-targeting transit peptide spans Met1–Ala82. At Ala83 to Lys98 the chain is on the chloroplast intermembrane side. A helical membrane pass occupies residues Val99 to Tyr119. The 119-residue stretch at Ile118 to Val236 folds into the EamA domain. The Lumenal portion of the chain corresponds to Asn120–Met131. Residues Thr132–Asn152 form a helical membrane-spanning segment. Residues Leu153–Ala209 lie on the Chloroplast intermembrane side of the membrane. The chain crosses the membrane as a helical span at residues Met210–Gly230. Topologically, residues Val231–Thr278 are lumenal. Residues Leu279–Ser298 form a helical membrane-spanning segment. At Glu299–Val374 the chain is on the chloroplast intermembrane side. Residues Asn375 to Arg394 form a helical membrane-spanning segment. Topologically, residues Ile395–Ala402 are lumenal.

Belongs to the TPT transporter family. TPT (TC 2.A.7.9) subfamily. As to quaternary structure, homodimer.

The protein resides in the plastid. The protein localises to the chloroplast membrane. Its function is as follows. Mediates the export of fixed carbons from the chloroplasts into the cytosol in the form of triose phosphates. This chain is Triose phosphate/phosphate translocator, non-green plastid, chloroplastic (NGTPT), found in Brassica oleracea var. botrytis (Cauliflower).